Here is a 774-residue protein sequence, read N- to C-terminus: Acetyl-CoA decarbonylase/synthase complex subunit alpha (774 aa).

[4Fe-4S] cluster-binding residues include Cys73, Cys76, Cys77, Cys79, Cys84, and Cys94. His117 provides a ligand contact to CO. Residues His251, Cys279, and Cys318 each contribute to the [Ni-4Fe-4S] cluster site. 2 consecutive 4Fe-4S ferredoxin-type domains span residues 398–427 (LNEV…VKEA) and 436–466 (FKGF…VSMT). The [4Fe-4S] cluster site is built by Cys408, Cys411, Cys414, Cys418, Cys446, Cys449, Cys452, and Cys456. The [Ni-4Fe-4S] cluster site is built by Cys514, Cys543, and Cys578.

It belongs to the Ni-containing carbon monoxide dehydrogenase family. In terms of assembly, heterotetramer of two alpha and two epsilon subunits. The ACDS complex is made up of alpha, epsilon, beta, gamma and delta subunits with a probable stoichiometry of (alpha(2)epsilon(2))(4)-beta(8)-(gamma(1)delta(1))(8). [4Fe-4S] cluster is required as a cofactor. [Ni-4Fe-4S] cluster serves as cofactor.

It carries out the reaction CO + 2 oxidized [2Fe-2S]-[ferredoxin] + H2O = 2 reduced [2Fe-2S]-[ferredoxin] + CO2 + 2 H(+). In terms of biological role, part of the ACDS complex that catalyzes the reversible cleavage of acetyl-CoA, allowing autotrophic growth from CO(2). The alpha-epsilon subcomponent functions as a carbon monoxide dehydrogenase. This chain is Acetyl-CoA decarbonylase/synthase complex subunit alpha, found in Methanocaldococcus jannaschii (strain ATCC 43067 / DSM 2661 / JAL-1 / JCM 10045 / NBRC 100440) (Methanococcus jannaschii).